Reading from the N-terminus, the 384-residue chain is Polar flagellin C (384 aa).

A coiled-coil region spans residues 317–347; it reads AKQNRLSHSINNLANIQENVDASNSRIKDTD.

It belongs to the bacterial flagellin family. As to quaternary structure, heteromer of multiple flagellin subunits including FlaA, FlaB/D, FlaC, FlaE and FlaF. Homomer of FlaC is not able to form a functional filament.

It localises to the secreted. The protein resides in the bacterial flagellum. Flagellin is the subunit protein which polymerizes to form the filaments of bacterial flagella. FlaC is not essential for polar flagellar synthesis and swimming motility. Homomer of FlaC is not able to form a functional filament. This chain is Polar flagellin C (flaC), found in Vibrio parahaemolyticus serotype O3:K6 (strain RIMD 2210633).